The primary structure comprises 247 residues: 5-oxoprolinase subunit A (247 aa).

This sequence belongs to the LamB/PxpA family. In terms of assembly, forms a complex composed of PxpA, PxpB and PxpC.

The enzyme catalyses 5-oxo-L-proline + ATP + 2 H2O = L-glutamate + ADP + phosphate + H(+). Catalyzes the cleavage of 5-oxoproline to form L-glutamate coupled to the hydrolysis of ATP to ADP and inorganic phosphate. The chain is 5-oxoprolinase subunit A from Histophilus somni (strain 129Pt) (Haemophilus somnus).